The sequence spans 147 residues: Ubiquitin-conjugating enzyme E2 D2 (147 aa).

The UBC core domain occupies 1-147; it reads MALKRIHKEL…SREWTQKYAM (147 aa). The active-site Glycyl thioester intermediate is C85.

The protein belongs to the ubiquitin-conjugating enzyme family. As to quaternary structure, interacts with SCF (SKP1-CUL1-F-box protein) E3 ubiquitin ligase complex. Interacts with CNOT4 (via RING domain). Interacts with E3 ubiquitin-protein ligases CBLC, PJA1 and PJA2. Interacts with PDZRN3. Interacts with PPP1R11. Interacts with E3 ubiquitin-protein ligase PHF7; the interaction inhibits cleavage of PHF7 and promotes association of the complex with the nucleosome core particle.

The enzyme catalyses S-ubiquitinyl-[E1 ubiquitin-activating enzyme]-L-cysteine + [E2 ubiquitin-conjugating enzyme]-L-cysteine = [E1 ubiquitin-activating enzyme]-L-cysteine + S-ubiquitinyl-[E2 ubiquitin-conjugating enzyme]-L-cysteine.. The catalysed reaction is S-ubiquitinyl-[E1 ubiquitin-activating enzyme]-L-cysteine + [acceptor protein]-L-lysine = [E1 ubiquitin-activating enzyme]-L-cysteine + N(6)-monoubiquitinyl-[acceptor protein]-L-lysine.. The protein operates within protein modification; protein ubiquitination. In terms of biological role, accepts ubiquitin from the E1 complex and catalyzes its covalent attachment to other proteins. In vitro catalyzes 'Lys-48'-linked polyubiquitination. Mediates the selective degradation of short-lived and abnormal proteins. Functions in the E6/E6-AP-induced ubiquitination of p53/TP53. Mediates ubiquitination of PEX5 and SQSTM1 and autoubiquitination of STUB1 and TRAF6. Involved in the signal-induced conjugation and subsequent degradation of NFKBIA, FBXW2-mediated GCM1 ubiquitination and degradation, MDM2-dependent degradation of p53/TP53 and the activation of MAVS in the mitochondria by RIGI in response to viral infection. Essential for viral activation of IRF3. The polypeptide is Ubiquitin-conjugating enzyme E2 D2 (UBE2D2) (Sus scrofa (Pig)).